The sequence spans 633 residues: Extracellular metalloproteinase 3 (633 aa).

An N-terminal signal peptide occupies residues 1–18; sequence MHGLLLAGLLALPMNVLA. Residues 19–246 constitute a propeptide that is removed on maturation; it reads HPAEQHASNV…VHNVVDYVAS (228 aa). The N-linked (GlcNAc...) asparagine glycan is linked to Asn410. His429 is a Zn(2+) binding site. Glu430 is a catalytic residue. His433 serves as a coordination point for Zn(2+). Asn480 and Asn622 each carry an N-linked (GlcNAc...) asparagine glycan.

Belongs to the peptidase M36 family. Requires Zn(2+) as cofactor.

It localises to the secreted. Secreted metalloproteinase probably acting as a virulence factor. In Trichophyton equinum (Horse ringworm fungus), this protein is Extracellular metalloproteinase 3 (MEP3).